The chain runs to 373 residues: 4-hydroxy-3-methylbut-2-en-1-yl diphosphate synthase (flavodoxin) (373 aa).

[4Fe-4S] cluster contacts are provided by cysteine 270, cysteine 273, cysteine 305, and glutamate 312.

It belongs to the IspG family. The cofactor is [4Fe-4S] cluster.

It catalyses the reaction (2E)-4-hydroxy-3-methylbut-2-enyl diphosphate + oxidized [flavodoxin] + H2O + 2 H(+) = 2-C-methyl-D-erythritol 2,4-cyclic diphosphate + reduced [flavodoxin]. The protein operates within isoprenoid biosynthesis; isopentenyl diphosphate biosynthesis via DXP pathway; isopentenyl diphosphate from 1-deoxy-D-xylulose 5-phosphate: step 5/6. In terms of biological role, converts 2C-methyl-D-erythritol 2,4-cyclodiphosphate (ME-2,4cPP) into 1-hydroxy-2-methyl-2-(E)-butenyl 4-diphosphate. The protein is 4-hydroxy-3-methylbut-2-en-1-yl diphosphate synthase (flavodoxin) of Klebsiella pneumoniae subsp. pneumoniae (strain ATCC 700721 / MGH 78578).